Here is a 1086-residue protein sequence, read N- to C-terminus: Tudor domain-containing protein 7 (1086 aa).

HTH OST-type domains lie at 3–76 (EADL…YAVA) and 222–291 (KMDE…YPAR). The span at 295-306 (PLKSDQDPEKEL) shows a compositional bias: basic and acidic residues. The disordered stretch occupies residues 295–324 (PLKSDQDPEKELPPPPPAPKQEVPSQGSPA). Residues 325–394 (VMPDVKEKVA…TQKAILYAKL (70 aa)) form the HTH OST-type 3 domain. 2 consecutive Tudor domains span residues 501 to 558 (TVHV…FCSL) and 691 to 748 (LPFC…FLQE). The interval 844–866 (AASSPGNRNGGTPAPGSPAESLR) is disordered. The residue at position 847 (Ser847) is a Phosphoserine. The tract at residues 849–1086 (GNRNGGTPAP…QYLLELSKVN (238 aa)) is interaction with CDK17. Positions 881–1086 (TSSFSLEELP…QYLLELSKVN (206 aa)) are interaction with CABLES1.

It belongs to the TDRD7 family. Found in a mRNP complex, at least composed of TDRD1, TDRD6, TDRD7 and DDX4. Found in a complex containing CABLES1, CDK16 and CDK17. Interacts with CABLES1, CDK17 and PIWIL1. In terms of tissue distribution, mainly expressed in testis. Expressed in spermatogonia, spermatocytes and round spermatids (at protein level). Also expressed in the developing lens.

The protein resides in the cytoplasm. In terms of biological role, component of specific cytoplasmic RNA granules involved in post-transcriptional regulation of specific genes: probably acts by binding to specific mRNAs and regulating their translation. Required for lens transparency during lens development, by regulating translation of genes such as CRYBB3 and HSPB1 in the developing lens. Also required during spermatogenesis. This chain is Tudor domain-containing protein 7 (Tdrd7), found in Mus musculus (Mouse).